A 299-amino-acid polypeptide reads, in one-letter code: tRNA dimethylallyltransferase (299 aa).

Residue 10 to 17 (GPTAVGKT) coordinates ATP. Substrate is bound at residue 12–17 (TAVGKT). Residues 35–38 (DSQQ) are interaction with substrate tRNA.

Belongs to the IPP transferase family. In terms of assembly, monomer. The cofactor is Mg(2+).

The catalysed reaction is adenosine(37) in tRNA + dimethylallyl diphosphate = N(6)-dimethylallyladenosine(37) in tRNA + diphosphate. Functionally, catalyzes the transfer of a dimethylallyl group onto the adenine at position 37 in tRNAs that read codons beginning with uridine, leading to the formation of N6-(dimethylallyl)adenosine (i(6)A). The protein is tRNA dimethylallyltransferase of Streptococcus thermophilus (strain ATCC BAA-250 / LMG 18311).